A 232-amino-acid chain; its full sequence is Histone H1.X (232 aa).

The H15 domain maps to 36-112 (HHPSYMDMIK…GATGSFRMGK (77 aa)). Residues 142 to 232 (ISKAEKTKPS…LRTGTRKSYC (91 aa)) form a disordered region. Residues 159-197 (KKGKPISTMKKRGVMSKKRSSKNKMAPKAKSHGLKKKGP) show a composition bias toward basic residues.

It belongs to the histone H1/H5 family.

It is found in the nucleus. The protein resides in the chromosome. The chain is Histone H1.X (hil-1) from Caenorhabditis elegans.